A 201-amino-acid chain; its full sequence is ATP-dependent Clp protease proteolytic subunit (201 aa).

Ser-98 serves as the catalytic Nucleophile. His-123 is a catalytic residue.

The protein belongs to the peptidase S14 family. As to quaternary structure, fourteen ClpP subunits assemble into 2 heptameric rings which stack back to back to give a disk-like structure with a central cavity, resembling the structure of eukaryotic proteasomes.

It localises to the cytoplasm. It carries out the reaction Hydrolysis of proteins to small peptides in the presence of ATP and magnesium. alpha-casein is the usual test substrate. In the absence of ATP, only oligopeptides shorter than five residues are hydrolyzed (such as succinyl-Leu-Tyr-|-NHMec, and Leu-Tyr-Leu-|-Tyr-Trp, in which cleavage of the -Tyr-|-Leu- and -Tyr-|-Trp bonds also occurs).. Functionally, cleaves peptides in various proteins in a process that requires ATP hydrolysis. Has a chymotrypsin-like activity. Plays a major role in the degradation of misfolded proteins. The chain is ATP-dependent Clp protease proteolytic subunit from Desulfatibacillum aliphaticivorans.